The primary structure comprises 122 residues: Large ribosomal subunit protein uL14c (122 aa).

The protein belongs to the universal ribosomal protein uL14 family. As to quaternary structure, part of the 50S ribosomal subunit.

Its subcellular location is the plastid. The protein localises to the chloroplast. In terms of biological role, binds to 23S rRNA. The sequence is that of Large ribosomal subunit protein uL14c from Gracilaria tenuistipitata var. liui (Red alga).